Here is an 82-residue protein sequence, read N- to C-terminus: U1-plectoxin-Pt1a (82 aa).

The signal sequence occupies residues 1–20 (MKHLIFSSALVCALVVCTFA). Residues 21 to 33 (EEQVNVPFLPDER) constitute a propeptide that is removed on maturation. 5 disulfide bridges follow: C37/C51, C44/C57, C50/C68, C54/C77, and C59/C66. The O-palmitoyl serine moiety is linked to residue S79. The propeptide occupies 80 to 82 (RRR).

Belongs to the neurotoxin 02 (plectoxin) family. 02 (plectoxin) subfamily. Post-translationally, plectoxin-5 presumably undergoes post-translational modification to give rise to plectoxin-6. Expressed by the venom gland.

Its subcellular location is the secreted. In terms of biological role, potent toxin that may paralyze and/or kill insect pests such as H.virescens (lepidoptera), S.exigua (beet armyworm) and M.sexta (tobacco hornworm). The protein is U1-plectoxin-Pt1a of Plectreurys tristis (Spider).